The sequence spans 796 residues: Merozoite surface protein P92 (796 aa).

Positions 1 to 26 are cleaved as a signal peptide; it reads MFAVNLKICIFLSLVSFLLQCKNTLA. Residues asparagine 27, asparagine 37, asparagine 65, asparagine 71, asparagine 168, asparagine 240, asparagine 275, asparagine 359, asparagine 502, asparagine 511, asparagine 607, asparagine 633, asparagine 728, and asparagine 765 are each glycosylated (N-linked (GlcNAc...) asparagine). The 6-Cys domain occupies 571–720; the sequence is KYEGIDLTDS…NSIKQEINKK (150 aa). Cystine bridges form between cysteine 614/cysteine 691 and cysteine 625/cysteine 689.

In terms of assembly, interacts with host complement factor CFH isoform 1 (via sushi 4-6 domains) and CFH isoform FHL-1 (via sushi 4-6 domains); this interaction recruits CFH onto the merozoite surface preventing complement-mediated cell lysis. The interaction does not affect CFH activity.

It localises to the cell surface. It is found in the cell membrane. During the asexual blood stage, recruits host complement factor H CFH to the surface of merozoites resulting in the down-regulation of the host complement alternative pathway and thus, protecting merozoites from complement-mediated lysis. This Plasmodium falciparum (isolate 3D7) protein is Merozoite surface protein P92.